Reading from the N-terminus, the 656-residue chain is Protein arginine N-methyltransferase 7 (656 aa).

SAM-dependent MTase PRMT-type domains follow at residues 12–338 (EREW…FSIW) and 343–656 (GKDS…QSGN).

The protein belongs to the class I-like SAM-binding methyltransferase superfamily. Protein arginine N-methyltransferase family. PRMT7 subfamily.

Arginine methyltransferase that can both catalyze the formation of omega-N monomethylarginine (MMA) and symmetrical dimethylarginine (sDMA). The polypeptide is Protein arginine N-methyltransferase 7 (prmt-7) (Caenorhabditis briggsae).